Consider the following 505-residue polypeptide: Activin receptor type-1B (505 aa).

The first 23 residues, 1 to 23 (MAESAGASSFFPLVVLLLAGSGG), serve as a signal peptide directing secretion. At 24–126 (SGPRGIQALL…EHPSMWGPVE (103 aa)) the chain is on the extracellular side. Asparagine 43 is a glycosylation site (N-linked (GlcNAc...) asparagine). A helical transmembrane segment spans residues 127–149 (LVGIIAGPVFLLFLIIIIVFLVI). Residues 150–505 (NYHQRVYHNR…QLSVQEDVKI (356 aa)) are Cytoplasmic-facing. The region spanning 177–206 (KTLQDLVYDLSTSGSGSGLPLFVQRTVART) is the GS domain. A Protein kinase domain is found at 207 to 497 (IVLQEIIGKG…LRIKKTLSQL (291 aa)). Residues 213 to 221 (IGKGRFGEV) and lysine 234 contribute to the ATP site. The active-site Proton acceptor is aspartate 335. Position 380 is a phosphotyrosine (tyrosine 380).

The protein belongs to the protein kinase superfamily. TKL Ser/Thr protein kinase family. TGFB receptor subfamily. As to quaternary structure, forms an activin receptor complex with activin receptor type-2 (ACVR2A or ACVR2B). Part of a complex consisting of MAGI2/ARIP1, ACVR2A, ACVR1B and SMAD3. Interacts with SMAD2 and SMAD3. Interacts with SMAD7. Interacts with FKBP1A. Interacts with IGSF1. Interacts with CRIPTO. Interacts with TDP2. Interacts with TSC22D1/TSC-22. Requires Mg(2+) as cofactor. Mn(2+) serves as cofactor. Post-translationally, autophosphorylated. Phosphorylated by activin receptor type-2 (ACVR2A or ACVR2B) in response to activin-binding at serine and threonine residues in the GS domain. Phosphorylation of ACVR1B by activin receptor type-2 regulates association with SMAD7. Ubiquitinated. Level of ubiquitination is regulated by the SMAD7-SMURF1 complex. In terms of processing, ubiquitinated. In terms of tissue distribution, urogenital ridge, testis, ovary, brain and lungs.

The protein resides in the cell membrane. It catalyses the reaction L-threonyl-[receptor-protein] + ATP = O-phospho-L-threonyl-[receptor-protein] + ADP + H(+). The enzyme catalyses L-seryl-[receptor-protein] + ATP = O-phospho-L-seryl-[receptor-protein] + ADP + H(+). Activin receptor type-2 (ACVR2A or ACVR2B) activates the type-1 receptor through phosphorylation of its regulatory GS domain. In terms of biological role, transmembrane serine/threonine kinase activin type-1 receptor forming an activin receptor complex with activin receptor type-2 (ACVR2A or ACVR2B). Transduces the activin signal from the cell surface to the cytoplasm and is thus regulating a many physiological and pathological processes including neuronal differentiation and neuronal survival, hair follicle development and cycling, FSH production by the pituitary gland, wound healing, extracellular matrix production, immunosuppression and carcinogenesis. Activin is also thought to have a paracrine or autocrine role in follicular development in the ovary. Within the receptor complex, type-2 receptors (ACVR2A and/or ACVR2B) act as a primary activin receptors whereas the type-1 receptors like ACVR1B act as downstream transducers of activin signals. Activin binds to type-2 receptor at the plasma membrane and activates its serine-threonine kinase. The activated receptor type-2 then phosphorylates and activates the type-1 receptor such as ACVR1B. Once activated, the type-1 receptor binds and phosphorylates the SMAD proteins SMAD2 and SMAD3, on serine residues of the C-terminal tail. Soon after their association with the activin receptor and subsequent phosphorylation, SMAD2 and SMAD3 are released into the cytoplasm where they interact with the common partner SMAD4. This SMAD complex translocates into the nucleus where it mediates activin-induced transcription. Inhibitory SMAD7, which is recruited to ACVR1B through FKBP1A, can prevent the association of SMAD2 and SMAD3 with the activin receptor complex, thereby blocking the activin signal. Activin signal transduction is also antagonized by the binding to the receptor of inhibin-B via the IGSF1 inhibin coreceptor. ACVR1B also phosphorylates TDP2. This chain is Activin receptor type-1B (Acvr1b), found in Rattus norvegicus (Rat).